A 271-amino-acid chain; its full sequence is Tryptophan synthase alpha chain (271 aa).

Residues Glu49 and Asp60 each act as proton acceptor in the active site.

It belongs to the TrpA family. Tetramer of two alpha and two beta chains.

It catalyses the reaction (1S,2R)-1-C-(indol-3-yl)glycerol 3-phosphate + L-serine = D-glyceraldehyde 3-phosphate + L-tryptophan + H2O. It participates in amino-acid biosynthesis; L-tryptophan biosynthesis; L-tryptophan from chorismate: step 5/5. The alpha subunit is responsible for the aldol cleavage of indoleglycerol phosphate to indole and glyceraldehyde 3-phosphate. This Burkholderia pseudomallei (strain K96243) protein is Tryptophan synthase alpha chain.